The following is a 273-amino-acid chain: MPELPEVETSLRGVEPYLHGKIIKQIVVRTQKLRWAVSDELQHMQGAKIVALSRRAKYLILHTTQGDILIHLGMSGSLGILQENQQPAGKHDHVDLITQDGMVLRYNDPRKFGCWLWTKNAEQHELITRLGPEPLSESFTAAYLFARSRNKTVAVKNFIMNNDIVVGVGNIYACESLFMAGLHPELAAQNLTEKQCERLVKVIKEVLAKAIIQGGTTLKDFIQPDGKPGYFAQVLQVYGRKGEACNDCGTIIEAKVIGQRNSYFCPHCQILPR.

Proline 2 acts as the Schiff-base intermediate with DNA in catalysis. Glutamate 3 serves as the catalytic Proton donor. The active-site Proton donor; for beta-elimination activity is the lysine 57. Residues histidine 91, arginine 110, and lysine 151 each contribute to the DNA site. The FPG-type zinc-finger motif lies at 236 to 270 (QVYGRKGEACNDCGTIIEAKVIGQRNSYFCPHCQI). The active-site Proton donor; for delta-elimination activity is arginine 260.

The protein belongs to the FPG family. As to quaternary structure, monomer. It depends on Zn(2+) as a cofactor.

It carries out the reaction Hydrolysis of DNA containing ring-opened 7-methylguanine residues, releasing 2,6-diamino-4-hydroxy-5-(N-methyl)formamidopyrimidine.. The catalysed reaction is 2'-deoxyribonucleotide-(2'-deoxyribose 5'-phosphate)-2'-deoxyribonucleotide-DNA = a 3'-end 2'-deoxyribonucleotide-(2,3-dehydro-2,3-deoxyribose 5'-phosphate)-DNA + a 5'-end 5'-phospho-2'-deoxyribonucleoside-DNA + H(+). Its function is as follows. Involved in base excision repair of DNA damaged by oxidation or by mutagenic agents. Acts as a DNA glycosylase that recognizes and removes damaged bases. Has a preference for oxidized purines, such as 7,8-dihydro-8-oxoguanine (8-oxoG). Has AP (apurinic/apyrimidinic) lyase activity and introduces nicks in the DNA strand. Cleaves the DNA backbone by beta-delta elimination to generate a single-strand break at the site of the removed base with both 3'- and 5'-phosphates. This Actinobacillus pleuropneumoniae serotype 7 (strain AP76) protein is Formamidopyrimidine-DNA glycosylase.